The sequence spans 556 residues: Arginine--tRNA ligase (556 aa).

The 'HIGH' region signature appears at 132-142; that stretch reads ANPTGDLHLGH.

The protein belongs to the class-I aminoacyl-tRNA synthetase family. In terms of assembly, monomer.

Its subcellular location is the cytoplasm. The catalysed reaction is tRNA(Arg) + L-arginine + ATP = L-arginyl-tRNA(Arg) + AMP + diphosphate. This Listeria welshimeri serovar 6b (strain ATCC 35897 / DSM 20650 / CCUG 15529 / CIP 8149 / NCTC 11857 / SLCC 5334 / V8) protein is Arginine--tRNA ligase.